The sequence spans 310 residues: Zinc finger protein 42 homolog (310 aa).

Basic residues predominate over residues 1–15; that stretch reads MSQQLKKRAKTRHQK. Residues 1–35 form a disordered region; that stretch reads MSQQLKKRAKTRHQKGLGGRAPSGAKPRQGKSSQD. 4 consecutive C2H2-type zinc fingers follow at residues 188-212, 217-239, 245-269, and 275-299; these read IACP…LLIH, HVCA…FLVH, FRCT…VRIH, and FVCP…ILTH. Glycyl lysine isopeptide (Lys-Gly) (interchain with G-Cter in ubiquitin) cross-links involve residues Lys231 and Lys233.

This sequence belongs to the krueppel C2H2-type zinc-finger protein family. In terms of processing, polyubiquitinated by RNF12, leading to proteasomal degradation. In terms of tissue distribution, expressed in kidney, epidermal keratinocytes, prostate epithelial cells, bronchial and small airway lung epithelial cells (at protein level). Expressed in malignant kidney and several carcinoma cell lines (at protein level). Expressed in embryonic stem cells, kidney, epidermal keratinocytes, prostate epithelial cells, bronchial and small airway lung epithelial cells. Expressed in embryonal carcinomas, seminomas, malignant kidney and several carcinoma cell lines.

The protein localises to the nucleus. In terms of biological role, involved in the reprogramming of X-chromosome inactivation during the acquisition of pluripotency. Required for efficient elongation of TSIX, a non-coding RNA antisense to XIST. Binds DXPas34 enhancer within the TSIX promoter. Involved in ES cell self-renewal. This chain is Zinc finger protein 42 homolog (ZFP42), found in Homo sapiens (Human).